Consider the following 285-residue polypeptide: Protease HtpX homolog (285 aa).

2 consecutive transmembrane segments (helical) span residues 7 to 27 and 30 to 50; these read TAML…MIGG and GMTI…WFSD. Histidine 131 contacts Zn(2+). Glutamate 132 is a catalytic residue. Histidine 135 lines the Zn(2+) pocket. The next 2 membrane-spanning stretches (helical) occupy residues 146–166 and 177–197; these read ITAT…FFGG and IAGI…QMAI. Residue glutamate 202 participates in Zn(2+) binding.

It belongs to the peptidase M48B family. It depends on Zn(2+) as a cofactor.

It localises to the cell inner membrane. This is Protease HtpX homolog from Burkholderia lata (strain ATCC 17760 / DSM 23089 / LMG 22485 / NCIMB 9086 / R18194 / 383).